The following is a 93-amino-acid chain: Putative pterin-4-alpha-carbinolamine dehydratase (93 aa).

It belongs to the pterin-4-alpha-carbinolamine dehydratase family.

The catalysed reaction is (4aS,6R)-4a-hydroxy-L-erythro-5,6,7,8-tetrahydrobiopterin = (6R)-L-erythro-6,7-dihydrobiopterin + H2O. This chain is Putative pterin-4-alpha-carbinolamine dehydratase, found in Roseiflexus sp. (strain RS-1).